The following is a 940-amino-acid chain: Isoleucine--tRNA ligase (940 aa).

Positions 58–68 (PYANGSIHIGH) match the 'HIGH' region motif. E564 contributes to the L-isoleucyl-5'-AMP binding site. The 'KMSKS' region signature appears at 605 to 609 (KMSKS). Residue K608 coordinates ATP. Zn(2+)-binding residues include C903, C906, C923, and C926.

The protein belongs to the class-I aminoacyl-tRNA synthetase family. IleS type 1 subfamily. Monomer. Zn(2+) serves as cofactor.

It localises to the cytoplasm. The catalysed reaction is tRNA(Ile) + L-isoleucine + ATP = L-isoleucyl-tRNA(Ile) + AMP + diphosphate. Its function is as follows. Catalyzes the attachment of isoleucine to tRNA(Ile). As IleRS can inadvertently accommodate and process structurally similar amino acids such as valine, to avoid such errors it has two additional distinct tRNA(Ile)-dependent editing activities. One activity is designated as 'pretransfer' editing and involves the hydrolysis of activated Val-AMP. The other activity is designated 'posttransfer' editing and involves deacylation of mischarged Val-tRNA(Ile). The protein is Isoleucine--tRNA ligase of Shewanella baltica (strain OS155 / ATCC BAA-1091).